The chain runs to 70 residues: Protein SlyX homolog (70 aa).

This sequence belongs to the SlyX family.

This is Protein SlyX homolog from Shewanella sediminis (strain HAW-EB3).